Reading from the N-terminus, the 659-residue chain is tRNA uridine 5-carboxymethylaminomethyl modification enzyme MnmG (659 aa).

An FAD-binding site is contributed by 13–18 (GGGHAG). 281–295 (GPRYCPSVEDKINRF) is an NAD(+) binding site.

It belongs to the MnmG family. As to quaternary structure, homodimer. Heterotetramer of two MnmE and two MnmG subunits. Requires FAD as cofactor.

The protein localises to the cytoplasm. NAD-binding protein involved in the addition of a carboxymethylaminomethyl (cmnm) group at the wobble position (U34) of certain tRNAs, forming tRNA-cmnm(5)s(2)U34. The chain is tRNA uridine 5-carboxymethylaminomethyl modification enzyme MnmG from Delftia acidovorans (strain DSM 14801 / SPH-1).